Consider the following 147-residue polypeptide: Transcription elongation factor Spt5 (147 aa).

Residues 91-122 enclose the KOW domain; it reads KGDVVEIIAGPFKGERAKVIRVDKHKEEVTLE.

It belongs to the archaeal Spt5 family. As to quaternary structure, heterodimer composed of Spt4 and Spt5. Interacts with RNA polymerase (RNAP). Forms a homodimer in solution.

Stimulates transcription elongation. The protein is Transcription elongation factor Spt5 of Methanocaldococcus jannaschii (strain ATCC 43067 / DSM 2661 / JAL-1 / JCM 10045 / NBRC 100440) (Methanococcus jannaschii).